A 168-amino-acid polypeptide reads, in one-letter code: 6-pyruvoyl tetrahydrobiopterin synthase (168 aa).

His-19 contributes to the Zn(2+) binding site. Cys-38 acts as the Proton acceptor in catalysis. Zn(2+) is bound by residues His-44 and His-46. Active-site charge relay system residues include His-85 and Glu-130. At Ser-159 the chain carries Phosphoserine. At Thr-161 the chain carries Phosphothreonine. A phosphoserine mark is found at Ser-164, Ser-165, and Ser-167.

It belongs to the PTPS family. As to quaternary structure, homohexamer formed of two homotrimers in a head to head fashion. Requires Zn(2+) as cofactor.

It catalyses the reaction 7,8-dihydroneopterin 3'-triphosphate = 6-pyruvoyl-5,6,7,8-tetrahydropterin + triphosphate + H(+). Its pathway is cofactor biosynthesis; tetrahydrobiopterin biosynthesis; tetrahydrobiopterin from 7,8-dihydroneopterin triphosphate: step 1/3. Its function is as follows. Required for pigment and biopterin synthesis. The protein is 6-pyruvoyl tetrahydrobiopterin synthase (pr) of Drosophila melanogaster (Fruit fly).